The sequence spans 214 residues: Protein-L-isoaspartate O-methyltransferase (214 aa).

Residue Ser63 is part of the active site.

This sequence belongs to the methyltransferase superfamily. L-isoaspartyl/D-aspartyl protein methyltransferase family.

Its subcellular location is the cytoplasm. The enzyme catalyses [protein]-L-isoaspartate + S-adenosyl-L-methionine = [protein]-L-isoaspartate alpha-methyl ester + S-adenosyl-L-homocysteine. Functionally, catalyzes the methyl esterification of L-isoaspartyl residues in peptides and proteins that result from spontaneous decomposition of normal L-aspartyl and L-asparaginyl residues. It plays a role in the repair and/or degradation of damaged proteins. This is Protein-L-isoaspartate O-methyltransferase from Desulfotalea psychrophila (strain LSv54 / DSM 12343).